The chain runs to 38 residues: Large ribosomal subunit protein bL36 (38 aa).

It belongs to the bacterial ribosomal protein bL36 family.

This Acinetobacter baylyi (strain ATCC 33305 / BD413 / ADP1) protein is Large ribosomal subunit protein bL36.